The chain runs to 1306 residues: Clustered mitochondria protein homolog (1306 aa).

Low complexity predominate over residues 1–11 (MAVNNEVNNAA). The interval 1–47 (MAVNNEVNNAASETPTDVSSSSQKLATEETALTNGADHEEEDGGEAG) is disordered. Residues 12–33 (SETPTDVSSSSQKLATEETALT) are compositionally biased toward polar residues. A Clu domain is found at 336–580 (DITRTQENYL…RVTPLDITWM (245 aa)). Disordered regions lie at residues 630–689 (ERKR…QERI) and 912–956 (KQSQ…SPAA). The segment covering 656–689 (EPAKSEEPTENGELAKKSESDEAAEPSKPDQERI) has biased composition (basic and acidic residues). 3 TPR repeats span residues 1032 to 1065 (ARVYNSLSMLYYQLDEKEAAMELARKAVIVSERT), 1074 to 1107 (LLNYLNLGLIAHASGETKLALTYIKHALDLWKVV), and 1116 to 1149 (ITTINNAAVMLQHLKEYHDSRTWFEASLKICEEV). The interval 1275–1306 (FIEGSDQSNQNKKRPGRSNPKRRGGAAATAGK) is disordered. Residues 1285-1298 (NKKRPGRSNPKRRG) show a composition bias toward basic residues.

It belongs to the CLU family. May associate with the eukaryotic translation initiation factor 3 (eIF-3) complex.

The protein localises to the cytoplasm. Functionally, mRNA-binding protein involved in proper cytoplasmic distribution of mitochondria. The chain is Clustered mitochondria protein homolog from Botryotinia fuckeliana (strain B05.10) (Noble rot fungus).